The sequence spans 158 residues: NAD(P)H-quinone oxidoreductase subunit J, chloroplastic (158 aa).

The protein belongs to the complex I 30 kDa subunit family. NDH is composed of at least 16 different subunits, 5 of which are encoded in the nucleus.

The protein localises to the plastid. The protein resides in the chloroplast thylakoid membrane. The enzyme catalyses a plastoquinone + NADH + (n+1) H(+)(in) = a plastoquinol + NAD(+) + n H(+)(out). It carries out the reaction a plastoquinone + NADPH + (n+1) H(+)(in) = a plastoquinol + NADP(+) + n H(+)(out). NDH shuttles electrons from NAD(P)H:plastoquinone, via FMN and iron-sulfur (Fe-S) centers, to quinones in the photosynthetic chain and possibly in a chloroplast respiratory chain. The immediate electron acceptor for the enzyme in this species is believed to be plastoquinone. Couples the redox reaction to proton translocation, and thus conserves the redox energy in a proton gradient. This is NAD(P)H-quinone oxidoreductase subunit J, chloroplastic from Eucalyptus globulus subsp. globulus (Tasmanian blue gum).